The chain runs to 406 residues: Eukaryotic initiation factor 4A-I (406 aa).

A disordered region spans residues Met1–Gly21. Position 2 is an N-acetylserine (Ser2). A Phosphoserine modification is found at Ser4. A Q motif motif is present at residues Asp32 to Gln60. The Helicase ATP-binding domain maps to Ile63–Ile234. Residue Ala76–Thr83 coordinates ATP. At Lys118 the chain carries N6-acetyllysine. Lys146 is covalently cross-linked (Glycyl lysine isopeptide (Lys-Gly) (interchain with G-Cter in SUMO2)). At Thr158 the chain carries Phosphothreonine. At Lys174 the chain carries N6-acetyllysine. Positions Asp182–Asp185 match the DEAD box motif. Position 193 is an N6-acetyllysine (Lys193). Lys225 is covalently cross-linked (Glycyl lysine isopeptide (Lys-Gly) (interchain with G-Cter in SUMO2)). An N6-acetyllysine; alternate modification is found at Lys238. A Glycyl lysine isopeptide (Lys-Gly) (interchain with G-Cter in SUMO2); alternate cross-link involves residue Lys238. A Helicase C-terminal domain is found at Gly245–Ile406. Residues Lys309, Lys369, and Lys381 each participate in a glycyl lysine isopeptide (Lys-Gly) (interchain with G-Cter in SUMO2) cross-link.

Belongs to the DEAD box helicase family. eIF4A subfamily. In terms of assembly, eIF4F is a multi-subunit complex, the composition of which varies with external and internal environmental conditions. It is composed of at least EIF4A, EIF4E and EIF4G1/EIF4G3. Interacts with PAIP1, EIF4E and UPF2. Found in a complex with XPO7, EIF4A1, ARHGAP1, VPS26A, VPS29, VPS35 and SFN. May interact with NOM1. Interacts with PDCD4; this interferes with the interaction between EIF4A and EIF4G. Interacts with RBM4. Interacts with DDX3X in an RNA-independent manner. Interacts with PKP1 (via N-terminus); the interaction promotes EIF4A1 recruitment to the cap-dependent translation complex and EIF4A1 ATPase activity.

The protein resides in the cytoplasm. Its subcellular location is the perinuclear region. The protein localises to the cell membrane. It localises to the stress granule. It carries out the reaction ATP + H2O = ADP + phosphate + H(+). ATP-dependent RNA helicase which is a subunit of the eIF4F complex involved in cap recognition and is required for mRNA binding to ribosome. In the current model of translation initiation, eIF4A unwinds RNA secondary structures in the 5'-UTR of mRNAs which is necessary to allow efficient binding of the small ribosomal subunit, and subsequent scanning for the initiator codon. As a result, promotes cell proliferation and growth. This chain is Eukaryotic initiation factor 4A-I (EIF4A1), found in Macaca fascicularis (Crab-eating macaque).